Here is a 992-residue protein sequence, read N- to C-terminus: MGPPSSSGFYVSRAVALLLAALAAALLLALAVLAALYGRCARVQPSDLHHGGVPDAASSPRGTQEEQLPTWPPRPTREPAGTATPGHWRPPGPWDQLRLPPWLVPLHYELELWPRLRPNEFQSPTLSFTGRVNITVRCTAATARLLLHSLFLDCESAEVRGPLSSGPRDGAVGRVPVDDVWFAFDMQYMVLELGATLQPGSRYELQLSFSGLVYRDLREGLFFSIYTDQGERRALLASQMEPTFARSVFPCFDEPALKATFNITIIHHPSYGALSNMPKLGQSEKRDVNGSVWTITTFSTTPHMPTYLVALAICDYDHVSRTERGQEIRIWARKDAIANGNAAFALNITGPIFSFLEDLFNISYPLPKTDIIALPTFDNSAMENWGLLIFDESLLLMQPNDQVTDKKAVISFILSHEIGHQWFGNLVTMNWWNDIWLKEGFASYFEFGVINYFNPKFRRNEVFFSNILHHVLSEDHALVSRAVSLKVENFTETSEINELFDLFTYNKGASLARMLSSFLNENVFISALKSYLKTFSYSTAEQDDLWRHFQMVVDDQSKILLPAPVKSIMDRWTHQSGFPVITLNVSTGAMKQEPFYLGKVKNQTLLTHNDTWIVPILWIKNGITQSLVWLDKSSKIFPEMQVSDSDHDWVILNLNMTGYYRVNYDKVGWKKLKQQLEKDPKAIPVIHRLQMIDDAFSLSKNNYVEIETALDLTKYLAEEDEIIVWYAVLVNLVTKDLVFDVNNYDMYPLLKKYLLKRLISIWNMYSTVIRENVAALQDDYLALVALEKLFETACWLGLEDCLQLSRELFKNWTNHPENEIPYPIKSVVLCYGVAFGSDEEWDFLLNMYSNKTKEEERIQLTYAMSCSKDPWILHRYLEYAVTAAPFTFNETNIMEVVAESEVGRYIVKDFLINNWQAVSERYGTQSLVNLMYIIGRTISTDLQITELQQFFSNMLEEHQKLTVRAKLQTIKNKNLGNKKLNARMTAWLRKNT.

Topologically, residues 2–13 (GPPSSSGFYVSR) are cytoplasmic. A helical; Signal-anchor for type II membrane protein membrane pass occupies residues 14–34 (AVALLLAALAAALLLALAVLA). Residues 35-992 (ALYGRCARVQ…RMTAWLRKNT (958 aa)) are Extracellular-facing. Residues 48–92 (LHHGGVPDAASSPRGTQEEQLPTWPPRPTREPAGTATPGHWRPPG) are disordered. A glycan (N-linked (GlcNAc...) asparagine) is linked at asparagine 133. Substrate is bound at residue glutamate 241. 4 N-linked (GlcNAc...) asparagine glycosylation sites follow: asparagine 262, asparagine 289, asparagine 347, and asparagine 361. 380–384 (SAMEN) is a binding site for substrate. Zn(2+) is bound at residue histidine 416. Glutamate 417 functions as the Proton acceptor in the catalytic mechanism. Zn(2+) contacts are provided by histidine 420 and glutamate 439. Asparagine 489 is a glycosylation site (N-linked (GlcNAc...) asparagine). Tyrosine 505 (proton donor) is an active-site residue. Asparagine 584, asparagine 602, asparagine 609, asparagine 655, asparagine 811, asparagine 850, and asparagine 889 each carry an N-linked (GlcNAc...) asparagine glycan.

This sequence belongs to the peptidase M1 family. The cofactor is Zn(2+). Expressed in skin. Expression levels do not differ between dark and light skin areas.

The protein localises to the membrane. Functionally, metalloprotease which may be important for placentation by regulating biological activity of key peptides at the embryo-maternal interface. Involved in coat pigmentation patterns. During skin development, may be required to establish the periodicity of tabby markings, initiating a pre-pattern at or before hair follicle development. The sequence is that of Aminopeptidase Q (LVRN) from Acinonyx jubatus (Cheetah).